A 179-amino-acid polypeptide reads, in one-letter code: Large ribosomal subunit protein uL5 (179 aa).

The protein belongs to the universal ribosomal protein uL5 family. As to quaternary structure, part of the 50S ribosomal subunit; part of the 5S rRNA/L5/L18/L25 subcomplex. Contacts the 5S rRNA and the P site tRNA. Forms a bridge to the 30S subunit in the 70S ribosome.

In terms of biological role, this is one of the proteins that bind and probably mediate the attachment of the 5S RNA into the large ribosomal subunit, where it forms part of the central protuberance. In the 70S ribosome it contacts protein S13 of the 30S subunit (bridge B1b), connecting the 2 subunits; this bridge is implicated in subunit movement. Contacts the P site tRNA; the 5S rRNA and some of its associated proteins might help stabilize positioning of ribosome-bound tRNAs. The sequence is that of Large ribosomal subunit protein uL5 from Vibrio parahaemolyticus serotype O3:K6 (strain RIMD 2210633).